Here is a 299-residue protein sequence, read N- to C-terminus: F-actin-capping protein subunit alpha-3 (299 aa).

Phosphoserine is present on residues Ser-2 and Ser-290.

The protein belongs to the F-actin-capping protein alpha subunit family. Component of the F-actin capping complex, composed of a heterodimer of an alpha and a beta subunit. Component of the WASH complex, composed of F-actin-capping protein subunit alpha (CAPZA1, CAPZA2 or CAPZA3), F-actin-capping protein subunit beta (CAPZB), WASHC1, WASHC2, WASHC3, WASHC4 and WASHC5. As to expression, exclusively expressed in the testis.

It localises to the cytoplasm. Its subcellular location is the cytoskeleton. Its function is as follows. F-actin-capping proteins bind in a Ca(2+)-independent manner to the fast growing ends of actin filaments (barbed end) thereby blocking the exchange of subunits at these ends. Unlike other capping proteins (such as gelsolin and severin), these proteins do not sever actin filaments. May play a role in the morphogenesis of spermatid. This is F-actin-capping protein subunit alpha-3 (Capza3) from Rattus norvegicus (Rat).